We begin with the raw amino-acid sequence, 405 residues long: 4-hydroxy-3-methylbut-2-enyl diphosphate reductase (405 aa).

[4Fe-4S] cluster is bound at residue C66. H96 contacts (2E)-4-hydroxy-3-methylbut-2-enyl diphosphate. Dimethylallyl diphosphate is bound at residue H96. H96 lines the isopentenyl diphosphate pocket. C157 contributes to the [4Fe-4S] cluster binding site. (2E)-4-hydroxy-3-methylbut-2-enyl diphosphate is bound at residue H185. H185 is a dimethylallyl diphosphate binding site. H185 provides a ligand contact to isopentenyl diphosphate. Catalysis depends on E187, which acts as the Proton donor. T250 is a binding site for (2E)-4-hydroxy-3-methylbut-2-enyl diphosphate. C288 contributes to the [4Fe-4S] cluster binding site. Residues S317, S318, N319, and S380 each contribute to the (2E)-4-hydroxy-3-methylbut-2-enyl diphosphate site. Residues S317, S318, N319, and S380 each coordinate dimethylallyl diphosphate. Residues S317, S318, N319, and S380 each coordinate isopentenyl diphosphate.

The protein belongs to the IspH family. It depends on [4Fe-4S] cluster as a cofactor.

The enzyme catalyses isopentenyl diphosphate + 2 oxidized [2Fe-2S]-[ferredoxin] + H2O = (2E)-4-hydroxy-3-methylbut-2-enyl diphosphate + 2 reduced [2Fe-2S]-[ferredoxin] + 2 H(+). It carries out the reaction dimethylallyl diphosphate + 2 oxidized [2Fe-2S]-[ferredoxin] + H2O = (2E)-4-hydroxy-3-methylbut-2-enyl diphosphate + 2 reduced [2Fe-2S]-[ferredoxin] + 2 H(+). It functions in the pathway isoprenoid biosynthesis; dimethylallyl diphosphate biosynthesis; dimethylallyl diphosphate from (2E)-4-hydroxy-3-methylbutenyl diphosphate: step 1/1. The protein operates within isoprenoid biosynthesis; isopentenyl diphosphate biosynthesis via DXP pathway; isopentenyl diphosphate from 1-deoxy-D-xylulose 5-phosphate: step 6/6. Functionally, catalyzes the conversion of 1-hydroxy-2-methyl-2-(E)-butenyl 4-diphosphate (HMBPP) into a mixture of isopentenyl diphosphate (IPP) and dimethylallyl diphosphate (DMAPP). Acts in the terminal step of the DOXP/MEP pathway for isoprenoid precursor biosynthesis. The polypeptide is 4-hydroxy-3-methylbut-2-enyl diphosphate reductase (Prochlorococcus marinus (strain SARG / CCMP1375 / SS120)).